Consider the following 64-residue polypeptide: Prokaryotic ubiquitin-like protein Pup (64 aa).

Basic and acidic residues-rich tracts occupy residues 1–11 (MAQEQTKRTGG) and 25–34 (GQERREKLAE). A disordered region spans residues 1–38 (MAQEQTKRTGGGDEDEGSAGPEAAGQERREKLAEDTDD). Residues 21–58 (PEAAGQERREKLAEDTDDLLDEIDDVLEENAEDFVRAY) form an ARC ATPase binding region. Residues 24-52 (AGQERREKLAEDTDDLLDEIDDVLEENAE) are a coiled coil. Q64 bears the Deamidated glutamine mark. Residue Q64 forms an Isoglutamyl lysine isopeptide (Gln-Lys) (interchain with K-? in acceptor proteins) linkage.

Belongs to the prokaryotic ubiquitin-like protein family. Strongly interacts with the proteasome-associated ATPase ARC through a hydrophobic interface; the interacting region of Pup lies in its C-terminal half. There is one Pup binding site per ARC hexamer ring. Post-translationally, is modified by deamidation of its C-terminal glutamine to glutamate by the deamidase Dop, a prerequisite to the subsequent pupylation process.

Its pathway is protein degradation; proteasomal Pup-dependent pathway. In terms of biological role, protein modifier that is covalently attached to lysine residues of substrate proteins, thereby targeting them for proteasomal degradation. The tagging system is termed pupylation. In Nocardia farcinica (strain IFM 10152), this protein is Prokaryotic ubiquitin-like protein Pup.